Consider the following 362-residue polypeptide: MGTKPTEQVSWGLYSGYDEEAYSVGPLPELCYKADVQAFSRAFQPSVSLMVAVLGLAGNGLVLATHLAARRTTRSPTSVHLLQLALADLLLALTLPFAAAGALQGWNLGSTTCRAISGLYSASFHAGFLFLACISADRYVAIARALPAGQRPSTPSRAHLVSVFVWLLSLFLALPALLFSRDGPREGQRRCRLIFPESLTQTVKGASAVAQVVLGFALPLGVMAACYALLGRTLLAARGPERRRALRVVVALVVAFVVLQLPYSLALLLDTADLLAARERSCSSSKRKDLALLVTGGLTLVRCSLNPVLYAFLGLRFRRDLRRLLQGGGCSPKPNPRGRCPRRLRLSSCSAPTETHSLSWDN.

The Extracellular segment spans residues 1–48; that stretch reads MGTKPTEQVSWGLYSGYDEEAYSVGPLPELCYKADVQAFSRAFQPSVS. A helical membrane pass occupies residues 49–69; it reads LMVAVLGLAGNGLVLATHLAA. Residues 70–80 lie on the Cytoplasmic side of the membrane; the sequence is RRTTRSPTSVH. The helical transmembrane segment at 81 to 101 threads the bilayer; it reads LLQLALADLLLALTLPFAAAG. Residues 102–115 are Extracellular-facing; the sequence is ALQGWNLGSTTCRA. Cysteine 113 and cysteine 191 are joined by a disulfide. The helical transmembrane segment at 116-136 threads the bilayer; that stretch reads ISGLYSASFHAGFLFLACISA. At 137-159 the chain is on the cytoplasmic side; that stretch reads DRYVAIARALPAGQRPSTPSRAH. The helical transmembrane segment at 160 to 180 threads the bilayer; sequence LVSVFVWLLSLFLALPALLFS. Over 181–208 the chain is Extracellular; sequence RDGPREGQRRCRLIFPESLTQTVKGASA. A helical membrane pass occupies residues 209–229; that stretch reads VAQVVLGFALPLGVMAACYAL. At 230-247 the chain is on the cytoplasmic side; that stretch reads LGRTLLAARGPERRRALR. A helical transmembrane segment spans residues 248-268; sequence VVVALVVAFVVLQLPYSLALL. The Extracellular segment spans residues 269–291; sequence LDTADLLAARERSCSSSKRKDLA. A helical membrane pass occupies residues 292–312; sequence LLVTGGLTLVRCSLNPVLYAF. Residues 313-362 lie on the Cytoplasmic side of the membrane; the sequence is LGLRFRRDLRRLLQGGGCSPKPNPRGRCPRRLRLSSCSAPTETHSLSWDN.

It belongs to the G-protein coupled receptor 1 family. Expressed at high levels in small intestine, colon, lymph nodes, Peyer patches and at lower levels in thymus, lung and spleen.

Its subcellular location is the cell membrane. In terms of biological role, receptor for chemokines SCYA27 and SCYA28. Subsequently transduces a signal by increasing the intracellular calcium ions level. This Mus musculus (Mouse) protein is C-C chemokine receptor type 10 (Ccr10).